The sequence spans 214 residues: Pyridoxine/pyridoxamine 5'-phosphate oxidase (214 aa).

Substrate is bound by residues 8 to 11 and Lys-66; that span reads RINY. FMN-binding positions include 61–66, 76–77, Arg-82, Lys-83, and Gln-105; these read RIVLVK and FT. Tyr-123, Arg-127, and Ser-131 together coordinate substrate. Residues 140-141 and Trp-184 contribute to the FMN site; that span reads QS. 190 to 192 is a binding site for substrate; the sequence is RLH. Residue Arg-194 participates in FMN binding.

This sequence belongs to the pyridoxamine 5'-phosphate oxidase family. Homodimer. The cofactor is FMN.

It catalyses the reaction pyridoxamine 5'-phosphate + O2 + H2O = pyridoxal 5'-phosphate + H2O2 + NH4(+). It carries out the reaction pyridoxine 5'-phosphate + O2 = pyridoxal 5'-phosphate + H2O2. The protein operates within cofactor metabolism; pyridoxal 5'-phosphate salvage; pyridoxal 5'-phosphate from pyridoxamine 5'-phosphate: step 1/1. It functions in the pathway cofactor metabolism; pyridoxal 5'-phosphate salvage; pyridoxal 5'-phosphate from pyridoxine 5'-phosphate: step 1/1. In terms of biological role, catalyzes the oxidation of either pyridoxine 5'-phosphate (PNP) or pyridoxamine 5'-phosphate (PMP) into pyridoxal 5'-phosphate (PLP). The chain is Pyridoxine/pyridoxamine 5'-phosphate oxidase from Burkholderia multivorans (strain ATCC 17616 / 249).